A 315-amino-acid chain; its full sequence is Ribosomal RNA small subunit methyltransferase H (315 aa).

S-adenosyl-L-methionine contacts are provided by residues 42–44 (GGH), aspartate 59, phenylalanine 96, aspartate 108, and glutamine 115.

Belongs to the methyltransferase superfamily. RsmH family.

It localises to the cytoplasm. It catalyses the reaction cytidine(1402) in 16S rRNA + S-adenosyl-L-methionine = N(4)-methylcytidine(1402) in 16S rRNA + S-adenosyl-L-homocysteine + H(+). Functionally, specifically methylates the N4 position of cytidine in position 1402 (C1402) of 16S rRNA. The sequence is that of Ribosomal RNA small subunit methyltransferase H from Gemmatimonas aurantiaca (strain DSM 14586 / JCM 11422 / NBRC 100505 / T-27).